A 164-amino-acid chain; its full sequence is Interferon gamma (164 aa).

An N-terminal signal peptide occupies residues 1 to 19 (MTCQTYCLFVLSVIMIYFG). Asn-42, Asn-61, and Asn-95 each carry an N-linked (GlcNAc...) asparagine glycan.

The protein belongs to the type II (or gamma) interferon family. Homodimer.

It localises to the secreted. Functionally, produced by lymphocytes activated by specific antigens or mitogens. IFN-gamma, in addition to having antiviral activity, has important immunoregulatory functions. It is a potent activator of macrophages, it has antiproliferative effects on transformed cells and it can potentiate the antiviral and antitumor effects of the type I interferons. This Anas platyrhynchos (Mallard) protein is Interferon gamma (IFNG).